The primary structure comprises 1058 residues: Bromodomain-containing protein 1 (1058 aa).

Residues 1–12 (MRRKGRCHRGSA) show a composition bias toward basic residues. The segment at 1–26 (MRRKGRCHRGSAARHPSSPCSVKHSP) is disordered. The interaction with KAT7/HBO1 and histones stretch occupies residues 31–80 (LTYAQAQRMVEIEIEGRLHRISIFDPLEIILEDDLTAQEMSECNSNKENS). The disordered stretch occupies residues 92-116 (HKNNRVKKKNEALPSAHGTPASASA). Ser-128 bears the Phosphoserine mark. Residues 214 to 264 (DAVCCICMDGECQNSNVILFCDMCNLAVHQECYGVPYIPEGQWLCRHCLQS) form a PHD-type 1 zinc finger. Residues 268 to 301 (PADCVLCPNKGGAFKKTDDDRWGHVVCALWIPEV) form a C2HC pre-PHD-type zinc finger. A PHD-type 2 zinc finger spans residues 325–389 (LTCYLCKQKG…RKTAYCDVHT (65 aa)). 3 positions are modified to N6-acetyllysine: Lys-368, Lys-516, and Lys-519. Residues Lys-554 and Lys-594 each participate in a glycyl lysine isopeptide (Lys-Gly) (interchain with G-Cter in SUMO2) cross-link. The region spanning 562 to 666 (LRLTPLTVLL…DQGGVVLRQA (105 aa)) is the Bromo domain. Disordered stretches follow at residues 755–776 (LSQQ…EEDG) and 791–868 (LETL…DSSF). Residue Ser-803 is modified to Phosphoserine. Low complexity predominate over residues 852 to 867 (SESSISSSNSPLCDSS). Lys-903 carries the N6-acetyllysine modification. Residue Arg-906 is modified to Phosphoserine. Residues 929 to 1012 (PLKVVWAKCS…KSKMVPLGID (84 aa)) enclose the PWWP domain. Residues Ser-1052 and Ser-1055 each carry the phosphoserine modification.

In terms of assembly, component of some HBO1 complex composed of KAT7/HBO1, MEAF6, ING4 and BRD1/BRPF2. Component of the MOZ/MORF complex composed at least of ING5, KAT6A, KAT6B, MEAF6 and one of BRPF1, BRD1/BRPF2 and BRPF3. Interacts (via PHD-type zinc finger domain) with unmodified histone H3. Interacts (via PWWP domain) with dimethylated and trimethylated 'Lys-79' on histone H3. In terms of tissue distribution, highly expressed in testis.

The protein resides in the nucleus. The protein localises to the chromosome. Scaffold subunit of various histone acetyltransferase (HAT) complexes, such as the MOZ/MORF and HBO1 complexes, that acts as a regulator of hematopoiesis. Plays a key role in HBO1 complex by directing KAT7/HBO1 specificity towards histone H3 'Lys-14' acetylation (H3K14ac), thereby promoting erythroid differentiation. The sequence is that of Bromodomain-containing protein 1 from Homo sapiens (Human).